Here is a 131-residue protein sequence, read N- to C-terminus: Large ribosomal subunit protein bL12 (131 aa).

It belongs to the bacterial ribosomal protein bL12 family. In terms of assembly, homodimer. Part of the ribosomal stalk of the 50S ribosomal subunit. Forms a multimeric L10(L12)X complex, where L10 forms an elongated spine to which 2 to 4 L12 dimers bind in a sequential fashion. Binds GTP-bound translation factors.

Functionally, forms part of the ribosomal stalk which helps the ribosome interact with GTP-bound translation factors. Is thus essential for accurate translation. The polypeptide is Large ribosomal subunit protein bL12 (Prochlorococcus marinus subsp. pastoris (strain CCMP1986 / NIES-2087 / MED4)).